The primary structure comprises 100 residues: Large ribosomal subunit protein mL53 (100 aa).

The protein belongs to the mitochondrion-specific ribosomal protein mL53 family. Component of the mitochondrial large ribosomal subunit (mt-LSU). Mature yeast 74S mitochondrial ribosomes consist of a small (37S) and a large (54S) subunit. The 37S small subunit contains a 15S ribosomal RNA (15S mt-rRNA) and at least 32 different proteins. The 54S large subunit contains a 21S rRNA (21S mt-rRNA) and at least 45 different proteins.

It is found in the mitochondrion. In terms of biological role, component of the mitochondrial ribosome (mitoribosome), a dedicated translation machinery responsible for the synthesis of mitochondrial genome-encoded proteins, including at least some of the essential transmembrane subunits of the mitochondrial respiratory chain. The mitoribosomes are attached to the mitochondrial inner membrane and translation products are cotranslationally integrated into the membrane. The protein is Large ribosomal subunit protein mL53 (mrpl44) of Schizosaccharomyces pombe (strain 972 / ATCC 24843) (Fission yeast).